The primary structure comprises 1904 residues: Voltage-dependent calcium channel type A subunit alpha-1 (1904 aa).

The interval M1 to I45 is disordered. Residues G23–A35 show a composition bias toward gly residues. Over Y30–P168 the chain is Cytoplasmic. The I repeat unit spans residues N155–F447. A helical transmembrane segment spans residues P169 to L187. Residues E188–A205 are Extracellular-facing. The helical transmembrane segment at T206–L225 threads the bilayer. The Cytoplasmic segment spans residues G226–N237. The helical transmembrane segment at I238–I259 threads the bilayer. At E260–D264 the chain is on the extracellular side. The helical transmembrane segment at L265–I283 threads the bilayer. The Cytoplasmic segment spans residues P284–Q302. A helical membrane pass occupies residues I303–Y322. The Extracellular portion of the chain corresponds to S323–Y419. N-linked (GlcNAc...) asparagine glycosylation is found at N353 and N367. Residues N420–S444 form a helical membrane-spanning segment. Residues G445–Q568 are Cytoplasmic-facing. Residues K513 to E543 are disordered. Acidic residues predominate over residues T523–E536. The II repeat unit spans residues E554 to L797. The helical transmembrane segment at K569–V587 threads the bilayer. Over E588–F602 the chain is Extracellular. A helical membrane pass occupies residues A603–L622. Residues G623 to S630 lie on the Cytoplasmic side of the membrane. The helical transmembrane segment at S631–W649 threads the bilayer. Residues S650–G658 are Extracellular-facing. A helical transmembrane segment spans residues L659 to W677. Over K678–S696 the chain is Cytoplasmic. Residues L697–F716 form a helical membrane-spanning segment. Residues G717–I769 lie on the Extracellular side of the membrane. A helical membrane pass occupies residues Y770–V794. Over D795–N895 the chain is Cytoplasmic. A disordered region spans residues Q827–K869. One copy of the III repeat lies at A890 to A1177. Residues L896–L914 form a helical membrane-spanning segment. The Extracellular portion of the chain corresponds to A915–L930. Residues N931–I950 traverse the membrane as a helical segment. Residues D951–L962 lie on the Cytoplasmic side of the membrane. Residues R963–F981 traverse the membrane as a helical segment. The Extracellular portion of the chain corresponds to A982 to L994. Residue N993 is glycosylated (N-linked (GlcNAc...) asparagine). A helical transmembrane segment spans residues S995–K1013. At R1014–V1032 the chain is on the cytoplasmic side. The chain crosses the membrane as a helical span at residues I1033–Q1052. The Extracellular portion of the chain corresponds to L1053 to R1141. The helical transmembrane segment at I1142–L1166 threads the bilayer. The Cytoplasmic segment spans residues I1167–V1221. The IV repeat unit spans residues Y1214–S1470. A helical membrane pass occupies residues S1222–A1250. Over Y1251–L1255 the chain is Extracellular. A helical membrane pass occupies residues K1256 to A1275. At A1276–F1283 the chain is on the cytoplasmic side. The helical transmembrane segment at K1284 to A1302 threads the bilayer. Residues L1303–E1309 are Extracellular-facing. A helical membrane pass occupies residues N1310–L1328. The Cytoplasmic portion of the chain corresponds to L1329–K1347. A helical membrane pass occupies residues A1348–G1367. The Extracellular portion of the chain corresponds to M1368 to C1431. The phenylalkylamine binding stretch occupies residues G1430 to S1471. Residues G1432 to V1456 traverse the membrane as a helical segment. Over A1457–C1904 the chain is Cytoplasmic. One can recognise an EF-hand domain in the interval H1476–P1511. The Ca(2+) site is built by D1489, N1491, T1493, K1495, and E1500. 3 disordered regions span residues T1652 to P1694, T1710 to P1788, and G1870 to C1904. Over residues R1670 to P1681 the composition is skewed to low complexity. The span at G1682–H1691 shows a compositional bias: basic and acidic residues. Residues T1710–R1725 show a composition bias toward basic residues. Residues P1727 to P1740 are compositionally biased toward low complexity. Residues G1751–P1762 are compositionally biased toward polar residues. Residues P1771 to Q1784 show a composition bias toward basic residues.

The protein belongs to the calcium channel alpha-1 subunit (TC 1.A.1.11) family. CACNA1I subfamily. As to quaternary structure, interacts with CATSPER1 and CATSPER2, leading to suppress T-type calcium channel activity.

It is found in the membrane. Its function is as follows. Voltage-sensitive calcium channels (VSCC) mediate the entry of calcium ions into excitable cells and are also involved in a variety of calcium-dependent processes, including muscle contraction, neurotransmitter release, gene expression, cell motility, cell division and cell death. This is Voltage-dependent calcium channel type A subunit alpha-1 (CAC) from Apis mellifera (Honeybee).